The sequence spans 245 residues: rRNA adenine N-6-methyltransferase (245 aa).

Residues asparagine 10, leucine 12, glycine 37, glutamate 58, aspartate 83, and asparagine 100 each contribute to the S-adenosyl-L-methionine site.

The protein belongs to the class I-like SAM-binding methyltransferase superfamily. rRNA adenine N(6)-methyltransferase family.

It catalyses the reaction adenosine(2085) in 23S rRNA + 2 S-adenosyl-L-methionine = N(6)-dimethyladenosine(2085) in 23S rRNA + 2 S-adenosyl-L-homocysteine + 2 H(+). In terms of biological role, this protein produces a dimethylation of the adenine residue at position 2085 in 23S rRNA, resulting in reduced affinity between ribosomes and macrolide-lincosamide-streptogramin B antibiotics. The chain is rRNA adenine N-6-methyltransferase (ermBC) from Escherichia coli.